Here is a 159-residue protein sequence, read N- to C-terminus: V-type proton ATPase 16 kDa proteolipid subunit c (159 aa).

Residues Met1–Tyr12 are Lumenal-facing. The helical transmembrane segment at Gly13 to Gly35 threads the bilayer. The Cytoplasmic segment spans residues Thr36–Ser57. The chain crosses the membrane as a helical span at residues Ile58–Ile78. Residues Ala79–His96 are Lumenal-facing. A helical transmembrane segment spans residues Leu97–Gly118. The Cytoplasmic segment spans residues Asp119 to Arg130. A helical transmembrane segment spans residues Leu131–Leu156. The Lumenal segment spans residues Tyr157 to Lys159.

This sequence belongs to the V-ATPase proteolipid subunit family. In terms of assembly, V-ATPase is a heteromultimeric enzyme made up of two complexes: the ATP-hydrolytic V1 complex and the proton translocation V0 complex. The V1 complex consists of three catalytic AB heterodimers that form a heterohexamer, three peripheral stalks each consisting of EG heterodimers, one central rotor including subunits D and F, and the regulatory subunits C and H. The proton translocation complex V0 consists of the proton transport subunit a, a ring of proteolipid subunits c9c'', rotary subunit d, subunits e and f, and the accessory subunits VhaAC45 and ATP6AP2. Expressed in the larval middle mid-gut; predominantly in the copper cell region with lower levels of expression in the interstitial cells.

The protein localises to the membrane. In terms of biological role, proton-conducting pore forming subunit of the V0 complex of vacuolar(H+)-ATPase (V-ATPase), a multisubunit enzyme composed of a peripheral complex (V1) that hydrolyzes ATP and a membrane integral complex (V0) that translocates protons. V-ATPase is responsible for acidifying and maintaining the pH of intracellular compartments and in some cell types, is targeted to the plasma membrane, where it is responsible for acidifying the extracellular environment. In enterocytes, acts as part of a pHCl-2 sensory pathway which mediates Tor-dependent larval growth and metabolism in response to zinc availability. Likely acts in maintaining enterocyte lysosomal acidification which consequently promotes Tor activation at the lysosome membrane. This Drosophila melanogaster (Fruit fly) protein is V-type proton ATPase 16 kDa proteolipid subunit c (Vha16-1).